Here is a 180-residue protein sequence, read N- to C-terminus: GTP cyclohydrolase 1 (180 aa).

Residues cysteine 71, histidine 74, and cysteine 142 each coordinate Zn(2+).

This sequence belongs to the GTP cyclohydrolase I family. As to quaternary structure, homomer.

It catalyses the reaction GTP + H2O = 7,8-dihydroneopterin 3'-triphosphate + formate + H(+). The protein operates within cofactor biosynthesis; 7,8-dihydroneopterin triphosphate biosynthesis; 7,8-dihydroneopterin triphosphate from GTP: step 1/1. This is GTP cyclohydrolase 1 from Helicobacter pylori (strain P12).